Reading from the N-terminus, the 494-residue chain is Solute carrier family 2, facilitated glucose transporter member 3 (494 aa).

Over M1 to L10 the chain is Cytoplasmic. The chain crosses the membrane as a helical span at residues I11–N32. Residues A33–S64 lie on the Extracellular side of the membrane. A glycan (N-linked (GlcNAc...) asparagine) is linked at N43. Residues L65 to V85 traverse the membrane as a helical segment. Residues N86 to R90 are Cytoplasmic-facing. A helical membrane pass occupies residues R91–C111. Residues K112 to E118 lie on the Extracellular side of the membrane. Residues M119 to I142 form a helical membrane-spanning segment. The Cytoplasmic portion of the chain corresponds to G143–A153. A helical membrane pass occupies residues F154–L174. Residue Q159 participates in D-glucose binding. Topologically, residues K175–L183 are extracellular. A helical transmembrane segment spans residues W184–F204. The Cytoplasmic portion of the chain corresponds to C205–P269. T232 bears the Phosphothreonine mark. Residues I270–Y290 form a helical membrane-spanning segment. Residues Q277–S279 are important for selectivity against fructose. Residues Q280–Q281 and N286 contribute to the D-glucose site. Topologically, residues Y291 to P304 are extracellular. A helical transmembrane segment spans residues V305–L325. Position 315 (N315) interacts with D-glucose. Topologically, residues V326–R331 are cytoplasmic. The chain crosses the membrane as a helical span at residues R332–S352. Over L353–S363 the chain is Extracellular. Residues F364 to V389 traverse the membrane as a helical segment. The D-glucose site is built by E378 and W386. Residues A390 to P399 are Cytoplasmic-facing. Residues A400–F420 traverse the membrane as a helical segment. Residues P421 to A429 are Extracellular-facing. The helical transmembrane segment at Y430 to V450 threads the bilayer. Topologically, residues P451–A494 are cytoplasmic. The segment at T473–A494 is disordered. Residues N484 to A494 show a composition bias toward polar residues. S485 is subject to Phosphoserine. T492 carries the post-translational modification Phosphothreonine.

It belongs to the major facilitator superfamily. Sugar transporter (TC 2.A.1.1) family. Glucose transporter subfamily. In terms of assembly, interacts with SMIM43; the interaction may promote SLC2A3-mediated glucose transport to meet the energy needs of mesendoderm differentiation. As to expression, detected in placenta.

It is found in the cell membrane. It localises to the perikaryon. The protein resides in the cell projection. The catalysed reaction is D-glucose(out) = D-glucose(in). It carries out the reaction D-galactose(in) = D-galactose(out). With respect to regulation, deoxyglucose transport is inhibited by D-glucose, D-galactose and maltose. Galactose transport is inhibited by D-glucose and maltose. Functionally, facilitative glucose transporter. Can also mediate the uptake of various other monosaccharides across the cell membrane. Mediates the uptake of glucose, 2-deoxyglucose, galactose, mannose, xylose and fucose, and probably also dehydroascorbate. Does not mediate fructose transport. Required for mesendoderm differentiation. This chain is Solute carrier family 2, facilitated glucose transporter member 3, found in Ovis aries (Sheep).